The chain runs to 211 residues: UPF0319 protein VC_A0026 (211 aa).

A signal peptide spans 1-21 (MKPMQRLTCLLALCFAASASA).

Belongs to the UPF0319 family.

This is UPF0319 protein VC_A0026 from Vibrio cholerae serotype O1 (strain ATCC 39315 / El Tor Inaba N16961).